The following is a 1113-amino-acid chain: Protein KIBRA (1113 aa).

WW domains are found at residues 6 to 39 and 53 to 86; these read LPLP…DPRD and DELP…DPRV. Coiled coils occupy residues 107–193 and 293–431; these read LSAQ…RGFQ and NSNN…SSMQ. Ser141 carries the phosphoserine modification. Disordered stretches follow at residues 429 to 448 and 522 to 547; these read SMQS…SRGS and RSLS…SPPC. Over residues 522-532 the composition is skewed to polar residues; it reads RSLSGTPKSMT. The segment covering 533-542 has biased composition (low complexity); that stretch reads SLSPRSSLSS. Ser535 carries the post-translational modification Phosphoserine. Ser542 bears the Phosphoserine; by CDK1 mark. Positions 658–781 constitute a C2 domain; sequence GATRIQIALK…RSGERSTRWY (124 aa). The segment at 825-975 is disordered; sequence LEKRQEGRSS…RSVRMKRPSS (151 aa). An interaction with histone H3 region spans residues 839–1113; it reads EDSWRYEETS…NIPALSADDV (275 aa). Over residues 847-870 the composition is skewed to acidic residues; sequence TSENEAVAEEEEEEVEEEEGEEDV. At Ser899 the chain carries Phosphoserine. At Thr912 the chain carries Phosphothreonine. Residues 924–938 are compositionally biased toward polar residues; that stretch reads IIRSKTFSPGPQSQY. Ser927 carries the phosphoserine modification. The residue at position 929 (Thr929) is a Phosphothreonine. Ser931 is modified (phosphoserine; by CDK1). Ser947 bears the Phosphoserine mark. Interaction with PRKCZ stretches follow at residues 953-996 and 956-975; these read SKKP…LDLQ and PPFV…RPSS. Residues Ser975 and Ser978 each carry the phosphoserine; by PKC/PRKCZ modification. Residues 1001–1032 adopt a coiled-coil conformation; it reads WHSQLTQEISVLKELKEQLEQAKSHGEKELPQ. The short motif at 1111-1113 is the ADDV motif element; that stretch reads DDV.

It belongs to the WWC family. KIBRA subfamily. In terms of assembly, homodimer. Forms heterodimers with WWC2 and WWC3. Interacts with DDN. Interacts with DYNLL1 and histone H3. The interaction with DYNLL1 is mandatory for the recruitment and transactivation functions of ESR1 or DYNLL1 to the target chromatin and the interaction with histone H3 ensures proper regulatory interaction of WWC1-DYNLL1-ESR1 complexes with target chromatin. Interacts (via WW domains) with DDR1 (via PPxY motif) in a collagen-regulated manner. Interacts with PRKCZ (via the protein kinase domain). Forms a tripartite complex with DDR1 and PRKCZ, but predominantly in the absence of collagen. Interacts (via the ADDV motif) with PATJ (via PDZ domain 8). Interacts (via WW domains) with SYNPO (via PPxY motifs). Interacts with NF2 and SNX4. Interacts with DLC1 and PRKCZ. Interacts (via WW domains) with LATS1 and LATS2. In terms of processing, phosphorylation at Ser-542 and Ser-931 by CDK1 in response to spindle damage stress regulates mitotic exit, these two sites are dephosphorylated by CDC14B. Expressed in mammary epithelial cells and breast cancer cell lines. Found in the luminal epithelium surrounding the ducts in the normal breast. In the brain, expressed in somatodendritic compartment of neurons in the cortex and hippocampus and in the cerebellum it is found in the Purkinje cells and some granule cells (at protein level). Detected in brain, heart, colon and kidney. In the kidney, expressed in glomerular podocytes, in some tubules and in the collecting duct.

It is found in the cytoplasm. It localises to the perinuclear region. The protein resides in the nucleus. The protein localises to the cell projection. Its subcellular location is the ruffle membrane. It is found in the cytosol. Functionally, regulator of the Hippo signaling pathway, also known as the Salvador-Warts-Hippo (SWH) pathway. Enhances phosphorylation of LATS1 and YAP1 and negatively regulates cell proliferation and organ growth due to a suppression of the transcriptional activity of YAP1, the major effector of the Hippo pathway. Along with NF2 can synergistically induce the phosphorylation of LATS1 and LATS2 and function in the regulation of Hippo signaling pathway. Acts as a transcriptional coactivator of ESR1 which plays an essential role in DYNLL1-mediated ESR1 transactivation. Regulates collagen-stimulated activation of the ERK/MAPK cascade. Modulates directional migration of podocytes. Plays a role in cognition and memory performance. Plays an important role in regulating AMPA-selective glutamate receptors (AMPARs) trafficking underlying synaptic plasticity and learning. The sequence is that of Protein KIBRA from Homo sapiens (Human).